The sequence spans 295 residues: Pyridoxal 5'-phosphate synthase subunit PdxS (295 aa).

Asp-25 lines the D-ribose 5-phosphate pocket. The Schiff-base intermediate with D-ribose 5-phosphate role is filled by Lys-82. Position 154 (Gly-154) interacts with D-ribose 5-phosphate. Arg-166 contributes to the D-glyceraldehyde 3-phosphate binding site. D-ribose 5-phosphate is bound by residues Gly-215 and 236–237 (GS).

Belongs to the PdxS/SNZ family. As to quaternary structure, in the presence of PdxT, forms a dodecamer of heterodimers.

It catalyses the reaction aldehydo-D-ribose 5-phosphate + D-glyceraldehyde 3-phosphate + L-glutamine = pyridoxal 5'-phosphate + L-glutamate + phosphate + 3 H2O + H(+). Its pathway is cofactor biosynthesis; pyridoxal 5'-phosphate biosynthesis. Catalyzes the formation of pyridoxal 5'-phosphate from ribose 5-phosphate (RBP), glyceraldehyde 3-phosphate (G3P) and ammonia. The ammonia is provided by the PdxT subunit. Can also use ribulose 5-phosphate and dihydroxyacetone phosphate as substrates, resulting from enzyme-catalyzed isomerization of RBP and G3P, respectively. The polypeptide is Pyridoxal 5'-phosphate synthase subunit PdxS (Actinobacillus pleuropneumoniae serotype 7 (strain AP76)).